Here is a 365-residue protein sequence, read N- to C-terminus: Protein RecA (365 aa).

81–88 (GPESSGKT) is an ATP binding site.

This sequence belongs to the RecA family.

Its subcellular location is the cytoplasm. In terms of biological role, can catalyze the hydrolysis of ATP in the presence of single-stranded DNA, the ATP-dependent uptake of single-stranded DNA by duplex DNA, and the ATP-dependent hybridization of homologous single-stranded DNAs. It interacts with LexA causing its activation and leading to its autocatalytic cleavage. This is Protein RecA from Borreliella burgdorferi (strain ATCC 35210 / DSM 4680 / CIP 102532 / B31) (Borrelia burgdorferi).